A 100-amino-acid polypeptide reads, in one-letter code: uncharacterized protein (100 aa).

3 helical membrane-spanning segments follow: residues 11–33 (VWSI…SVLM), 45–64 (WMLA…SLVY), and 68–90 (WEGA…GYLI).

It localises to the cell membrane. This is an uncharacterized protein from Bacillus subtilis (strain 168).